A 408-amino-acid chain; its full sequence is Ubiquitin-associated domain-containing protein 1 (408 aa).

The Ubiquitin-like domain maps to 14 to 98 (LRLQVCTMEG…LLLIKKRAPP (85 aa)). The segment at 100-119 (LPKMADVSAEEKRKQEQKAP) is disordered. Residues 108–119 (AEEKRKQEQKAP) are compositionally biased toward basic and acidic residues. The region spanning 185 to 231 (DEDEEDRVDEIALRQLTEMGFPESRAVKALRLNHMSVTQAMEWLIEH) is the UBA 1 domain. The segment at 235–275 (PAVDAPLPGQTPSEAAAEAGASSAEATAGPSSEAGGEEAKD) is disordered. A compositionally biased stretch (low complexity) spans 245–268 (TPSEAAAEAGASSAEATAGPSSEA). A UBA 2 domain is found at 291–331 (RPDPRAVIALMEMGFDEKEVVDALRVNNNQQNAACEWLLGD). Residues 356–395 (NPVVQLGLTNPKTLLAFEDMLENPLNSTQWMNDPETGPVM) enclose the STI1 domain.

As to quaternary structure, component of the KPC complex.

The protein resides in the cytoplasm. It functions in the pathway protein modification; protein ubiquitination. Functionally, non-catalytic component of the KPC complex, a E3 ubiquitin-protein ligase complex that mediates polyubiquitination of target proteins, such as CDKN1B and NFKB1. Within the KPC complex, UBAC1 acts as an adapter that promotes the transfer of target proteins that have been polyubiquitinated by RNF123/KPC1 to the 26S proteasome. This is Ubiquitin-associated domain-containing protein 1 (UBAC1) from Gallus gallus (Chicken).